A 263-amino-acid polypeptide reads, in one-letter code: Putative hydro-lyase Psyc_1103 (263 aa).

It belongs to the D-glutamate cyclase family.

This chain is Putative hydro-lyase Psyc_1103, found in Psychrobacter arcticus (strain DSM 17307 / VKM B-2377 / 273-4).